We begin with the raw amino-acid sequence, 151 residues long: UPF0756 membrane protein GTNG_2661 (151 aa).

4 helical membrane passes run 5-25 (VLFL…SLII), 53-73 (WGVT…EIGF), 86-106 (WIAL…VMLL), and 116-136 (LVLG…GPLI).

It belongs to the UPF0756 family.

Its subcellular location is the cell membrane. This is UPF0756 membrane protein GTNG_2661 from Geobacillus thermodenitrificans (strain NG80-2).